The primary structure comprises 147 residues: Protein SprT-like (147 aa).

Residues 5–142 (DYVNEVSLED…SFCRGHLKEI (138 aa)) form the SprT-like domain. H64 contacts Zn(2+). Residue E65 is part of the active site. H68 serves as a coordination point for Zn(2+).

Belongs to the SprT family. Requires Zn(2+) as cofactor.

Its subcellular location is the cytoplasm. This is Protein SprT-like from Streptococcus uberis (strain ATCC BAA-854 / 0140J).